Here is a 797-residue protein sequence, read N- to C-terminus: Calcium-transporting ATPase CtpE (797 aa).

The next 3 helical transmembrane spans lie at 55–75 (LLLI…LLII), 215–235 (ILQF…YTQL), and 254–274 (VPMV…VGVV). Catalysis depends on aspartate 301, which acts as the 4-aspartylphosphate intermediate. Positions 301, 303, and 536 each coordinate Mg(2+). A run of 6 helical transmembrane segments spans residues 601–621 (TVYS…AIPL), 633–653 (IHVT…LSLA), 667–687 (VMTS…VTYL), 703–723 (ASTA…AVIA), 729–749 (WRLA…SLPL), and 764–784 (TSIA…MWWI).

This sequence belongs to the cation transport ATPase (P-type) (TC 3.A.3) family.

The protein localises to the cell membrane. It catalyses the reaction Ca(2+)(in) + ATP + H2O = Ca(2+)(out) + ADP + phosphate + H(+). Its function is as follows. P-type ATPase involved in specific uptake of calcium. This Mycobacterium bovis (strain ATCC BAA-935 / AF2122/97) protein is Calcium-transporting ATPase CtpE (ctpE).